The chain runs to 279 residues: NADPH-dependent 7-cyano-7-deazaguanine reductase (279 aa).

A substrate-binding site is contributed by 86–88; sequence IES. An NADPH-binding site is contributed by 88-89; it reads SK. The active-site Thioimide intermediate is the cysteine 187. Residue aspartate 194 is the Proton donor of the active site. 226–227 is a binding site for substrate; that stretch reads HE. Position 255–256 (255–256) interacts with NADPH; the sequence is RG.

The protein belongs to the GTP cyclohydrolase I family. QueF type 2 subfamily. Homodimer.

It is found in the cytoplasm. The catalysed reaction is 7-aminomethyl-7-carbaguanine + 2 NADP(+) = 7-cyano-7-deazaguanine + 2 NADPH + 3 H(+). Its pathway is tRNA modification; tRNA-queuosine biosynthesis. Catalyzes the NADPH-dependent reduction of 7-cyano-7-deazaguanine (preQ0) to 7-aminomethyl-7-deazaguanine (preQ1). In Haemophilus influenzae (strain PittEE), this protein is NADPH-dependent 7-cyano-7-deazaguanine reductase.